Reading from the N-terminus, the 1481-residue chain is Protein shortage in chiasmata 1 ortholog (1481 aa).

2 disordered regions span residues 479-498 and 512-560; these read TDVH…EKEV and KSKV…IQAS. Residues 513 to 531 show a composition bias toward basic and acidic residues; that stretch reads SKVEANPKNDQEPEARIMQ. Low complexity predominate over residues 543-560; that stretch reads SSQVPSAESASSSQIQAS.

This sequence belongs to the XPF family. Highly divergent. As to quaternary structure, interacts with TEX11. Interacts with SPO16. Mainly expressed in adult testis.

It is found in the chromosome. In terms of biological role, ATPase required during meiosis for the formation of crossover recombination intermediates. Binds DNA: preferentially binds to single-stranded DNA and DNA branched structures. Does not show nuclease activity in vitro, but shows ATPase activity, which is stimulated by the presence of single-stranded DNA. Plays a key role in homologous recombination and crossing-over in meiotic prophase I in male and female germ cells. Required for proper synaptonemal complex assembly and homologous chromosome pairing. Required for recruitment of TEX11 and MSH4 to recombination intermediates. This chain is Protein shortage in chiasmata 1 ortholog, found in Mus musculus (Mouse).